The following is a 466-amino-acid chain: Asparagine--tRNA ligase (466 aa).

Belongs to the class-II aminoacyl-tRNA synthetase family. In terms of assembly, homodimer.

It is found in the cytoplasm. The enzyme catalyses tRNA(Asn) + L-asparagine + ATP = L-asparaginyl-tRNA(Asn) + AMP + diphosphate + H(+). The polypeptide is Asparagine--tRNA ligase (Sodalis glossinidius (strain morsitans)).